We begin with the raw amino-acid sequence, 708 residues long: Leucine-rich repeat neuronal protein 3 (708 aa).

The first 22 residues, 1–22 (MKDMPLQIHVLLGLAITTLVQA), serve as a signal peptide directing secretion. Residues 23–69 (VDKKVDCPQLCTCEIRPWFTPTSIYMEASTVDCNDLGLLTFPARLPA) form the LRRNT domain. The Extracellular portion of the chain corresponds to 23-628 (VDKKVDCPQL…KEYEKSNTTT (606 aa)). 12 LRR repeats span residues 70–91 (NTQI…TDFP), 93–114 (NLTG…NVKK), 117–138 (QLLS…CLSE), 141–162 (NLQE…AFIG), 165–186 (NLLR…WFDA), 189–210 (NLEI…NFKP), 213–234 (NLRS…ALVG), 237–258 (NLES…ALQK), 261–282 (NLKF…DFSN), 285–304 (HLKE…DSLA), 310–332 (DLRK…AFFR), and 335–358 (KLES…ESLP). 2 N-linked (GlcNAc...) asparagine glycosylation sites follow: Asn93 and Asn103. N-linked (GlcNAc...) asparagine glycosylation occurs at Asn223. The LRRCT domain maps to 368-421 (NPIRCDCVIRWINMNKTNIRFMEPDSLFCVDPPEFQGQNVRQVHFRDMMEICLP). An N-linked (GlcNAc...) asparagine glycan is attached at Asn382. The 94-residue stretch at 421–514 (PLIAPESFPS…DLKSVMIKVD (94 aa)) folds into the Ig-like C2-type domain. Cys444 and Cys496 are disulfide-bonded. 4 N-linked (GlcNAc...) asparagine glycosylation sites follow: Asn522, Asn579, Asn608, and Asn625. The Fibronectin type-III domain maps to 523-617 (GSLNIKIRDI…NVTTKGLDPD (95 aa)). A helical membrane pass occupies residues 629–649 (LMACLGGLLGIIGVICLISCL). At 650–708 (SPEMNCDGGHSYVRNYLQKPTFALGELYPPLINLWEAGKEKSTSLKVKATVIGLPTNMS) the chain is on the cytoplasmic side.

It localises to the membrane. The sequence is that of Leucine-rich repeat neuronal protein 3 (LRRN3) from Pongo abelii (Sumatran orangutan).